A 213-amino-acid chain; its full sequence is Cytokinin riboside 5'-monophosphate phosphoribohydrolase LOG2 (213 aa).

Substrate contacts are provided by residues E79, 97–98, 114–120, and T126; these read RK and GYGTFEE.

This sequence belongs to the LOG family. In terms of tissue distribution, expressed in roots and shoots. Detected in root hairs.

It localises to the cytoplasm. It is found in the nucleus. The enzyme catalyses N(6)-(dimethylallyl)adenosine 5'-phosphate + H2O = N(6)-dimethylallyladenine + D-ribose 5-phosphate. It carries out the reaction 9-ribosyl-trans-zeatin 5'-phosphate + H2O = trans-zeatin + D-ribose 5-phosphate. Its function is as follows. Cytokinin-activating enzyme working in the direct activation pathway. Phosphoribohydrolase that converts inactive cytokinin nucleotides to the biologically active free-base forms. This is Cytokinin riboside 5'-monophosphate phosphoribohydrolase LOG2 (LOG2) from Arabidopsis thaliana (Mouse-ear cress).